We begin with the raw amino-acid sequence, 208 residues long: Probable GTP-binding protein EngB (208 aa).

Residues 18–187 (KQFEICVIGR…FALMKKVVIE (170 aa)) form the EngB-type G domain. GTP is bound by residues 26–33 (GRSNVGKS), 52–56 (GRTQL), 69–72 (DLPG), 135–138 (NKVD), and 166–168 (VSA). 2 residues coordinate Mg(2+): S33 and T54.

Belongs to the TRAFAC class TrmE-Era-EngA-EngB-Septin-like GTPase superfamily. EngB GTPase family. Mg(2+) serves as cofactor.

Its function is as follows. Necessary for normal cell division and for the maintenance of normal septation. This is Probable GTP-binding protein EngB from Ureaplasma urealyticum serovar 10 (strain ATCC 33699 / Western).